Reading from the N-terminus, the 628-residue chain is Biosynthetic arginine decarboxylase (628 aa).

N6-(pyridoxal phosphate)lysine is present on lysine 99. Residue 279–289 (VDVGGGLGIDY) coordinates substrate.

The protein belongs to the Orn/Lys/Arg decarboxylase class-II family. SpeA subfamily. It depends on Mg(2+) as a cofactor. Pyridoxal 5'-phosphate is required as a cofactor.

It catalyses the reaction L-arginine + H(+) = agmatine + CO2. In terms of biological role, catalyzes the biosynthesis of agmatine from arginine. The polypeptide is Biosynthetic arginine decarboxylase (Xylella fastidiosa (strain 9a5c)).